The sequence spans 435 residues: MSFCKLVSFVLILHLLNSCLISCSSNDLSQIPKNFLSLAKREDFFDWMVGIRRRIHENPELGYEEVETSKLVKTELDKMGVSYKNPVAVTGVIGYVGTGHAPFVALRADMDALPIQEMVEWEHKSKIPGKMHACGHDAHTTMLLGAAKLLKEHQEELQGTVILVFQPAEEGGAGAKKIVEAGVLENVGAIFGLHVSNLLGLGQLSSREGLLMAGSGRFKATISGKGGHAALPQFAIDPVLAASNVILSLQHLVSREADPLDSQVVTVATFEGSDAFNVIPDSVTIGGTFRALLPKSFEQLKQRIVQVITTQASVNMCNATVDFLEDETPPFPPTVNNKTLHLFYKNVSVDMLGIENYVETLPVMVSEDFAFYQQAIPGHFSFVGMQNKSHSPMANPHSPFFEVNEELLPYGASLLASLATRYLLDSSSSPNKDEL.

A signal peptide spans 1 to 25 (MSFCKLVSFVLILHLLNSCLISCSS). 5 residues coordinate Mn(2+): Cys-134, His-136, Glu-170, His-194, and His-397. The short motif at 432–435 (KDEL) is the Prevents secretion from ER element.

Belongs to the peptidase M20 family.

The protein resides in the endoplasmic reticulum lumen. Its function is as follows. Hydrolyzes certain amino acid conjugates of the plant growth regulator indole-3-acetic acid (IAA). The chain is IAA-amino acid hydrolase ILR1-like 5 from Arabidopsis thaliana (Mouse-ear cress).